The chain runs to 103 residues: Large ribosomal subunit protein bL21 (103 aa).

It belongs to the bacterial ribosomal protein bL21 family. Part of the 50S ribosomal subunit. Contacts protein L20.

In terms of biological role, this protein binds to 23S rRNA in the presence of protein L20. The sequence is that of Large ribosomal subunit protein bL21 from Aliivibrio fischeri (strain ATCC 700601 / ES114) (Vibrio fischeri).